Reading from the N-terminus, the 237-residue chain is LexA repressor (237 aa).

A compositionally biased stretch (polar residues) spans 1-12 (MPVKDSSSNKKN). The disordered stretch occupies residues 1–20 (MPVKDSSSNKKNQIGKLSER). The segment at residues 41–61 (IREIGDAAGLQSTSSVAYQLK) is a DNA-binding region (H-T-H motif). The span at 67 to 80 (GYLRRDPNKPRAVD) shows a compositional bias: basic and acidic residues. The interval 67 to 112 (GYLRRDPNKPRAVDVRALPDPIPSKPGRKPGPKKSSVAISPDPAET) is disordered. Catalysis depends on for autocatalytic cleavage activity residues Ser161 and Lys198.

The protein belongs to the peptidase S24 family. In terms of assembly, homodimer.

It catalyses the reaction Hydrolysis of Ala-|-Gly bond in repressor LexA.. In terms of biological role, represses a number of genes involved in the response to DNA damage (SOS response), including recA and lexA. In the presence of single-stranded DNA, RecA interacts with LexA causing an autocatalytic cleavage which disrupts the DNA-binding part of LexA, leading to derepression of the SOS regulon and eventually DNA repair. This chain is LexA repressor, found in Corynebacterium diphtheriae (strain ATCC 700971 / NCTC 13129 / Biotype gravis).